The primary structure comprises 220 residues: Cytidylate kinase (220 aa).

10–18 contacts ATP; the sequence is GPASSGKST.

This sequence belongs to the cytidylate kinase family. Type 1 subfamily.

The protein resides in the cytoplasm. It carries out the reaction CMP + ATP = CDP + ADP. The catalysed reaction is dCMP + ATP = dCDP + ADP. This chain is Cytidylate kinase, found in Lactococcus lactis subsp. cremoris (strain SK11).